A 290-amino-acid chain; its full sequence is UPF0507 protein YML003W (290 aa).

It belongs to the UPF0507 family.

This chain is UPF0507 protein YML003W, found in Saccharomyces cerevisiae (strain ATCC 204508 / S288c) (Baker's yeast).